The following is a 104-amino-acid chain: MTQVAKNDHRLMQVLLSPVVSEKATLVADKNEQVVFEVARDANKGEVKAAVELLFKVEVESVQILNQKGKQKRFGRFMGRRDHVKKAYVSLKPGQEINFEAEAK.

Belongs to the universal ribosomal protein uL23 family. As to quaternary structure, part of the 50S ribosomal subunit. Contacts protein L29, and trigger factor when it is bound to the ribosome.

One of the early assembly proteins it binds 23S rRNA. One of the proteins that surrounds the polypeptide exit tunnel on the outside of the ribosome. Forms the main docking site for trigger factor binding to the ribosome. This Ralstonia nicotianae (strain ATCC BAA-1114 / GMI1000) (Ralstonia solanacearum) protein is Large ribosomal subunit protein uL23.